Reading from the N-terminus, the 206-residue chain is Xanthine phosphoribosyltransferase (206 aa).

Xanthine contacts are provided by Leu-28 and Asn-35. A 5-phospho-alpha-D-ribose 1-diphosphate-binding site is contributed by Ala-136 to Ala-140. Lys-164 contributes to the xanthine binding site.

It belongs to the purine/pyrimidine phosphoribosyltransferase family. Xpt subfamily. Homodimer.

Its subcellular location is the cytoplasm. The enzyme catalyses XMP + diphosphate = xanthine + 5-phospho-alpha-D-ribose 1-diphosphate. Its pathway is purine metabolism; XMP biosynthesis via salvage pathway; XMP from xanthine: step 1/1. Converts the preformed base xanthine, a product of nucleic acid breakdown, to xanthosine 5'-monophosphate (XMP), so it can be reused for RNA or DNA synthesis. The chain is Xanthine phosphoribosyltransferase from Oenococcus oeni (strain ATCC BAA-331 / PSU-1).